A 361-amino-acid chain; its full sequence is KDEL-tailed cysteine endopeptidase CEP2 (361 aa).

A signal peptide spans 1-20 (MKKLLLIFLFSLVILQTACG). Residues 21–127 (FDYDDKEIES…FMYDHENLSK (107 aa)) constitute a propeptide, activation peptide. Residues asparagine 75 and asparagine 124 are each glycosylated (N-linked (GlcNAc...) asparagine). 3 disulfides stabilise this stretch: cysteine 149-cysteine 191, cysteine 183-cysteine 224, and cysteine 282-cysteine 333. Cysteine 152 is an active-site residue. Active-site residues include histidine 288 and asparagine 308. The short motif at 358–361 (KDEL) is the Prevents secretion from ER element.

This sequence belongs to the peptidase C1 family. In terms of tissue distribution, expressed in roots, stems, rosette and cauline leaves, flowers, buds and green siliques. Found in the tip of young primary leaves, in very young root tips and at later stages in all tissues of lateral root, including the vascular bundle. Not expressed in lateral root primordia, while directly emerging through the epidermis.

Its subcellular location is the endoplasmic reticulum. Functionally, involved in the final stage of developmental programmed cell death and in intercalation of new cells. Cleaves extensins, thus probably supporting the final cell collapse. In Arabidopsis thaliana (Mouse-ear cress), this protein is KDEL-tailed cysteine endopeptidase CEP2.